The primary structure comprises 1408 residues: DNA-directed RNA polymerase subunit beta' (1408 aa).

The Zn(2+) site is built by Cys70, Cys72, Cys85, and Cys88. 3 residues coordinate Mg(2+): Asp460, Asp462, and Asp464. Zn(2+) is bound by residues Cys814, Cys888, Cys895, and Cys898.

Belongs to the RNA polymerase beta' chain family. The RNAP catalytic core consists of 2 alpha, 1 beta, 1 beta' and 1 omega subunit. When a sigma factor is associated with the core the holoenzyme is formed, which can initiate transcription. It depends on Mg(2+) as a cofactor. The cofactor is Zn(2+).

It carries out the reaction RNA(n) + a ribonucleoside 5'-triphosphate = RNA(n+1) + diphosphate. Functionally, DNA-dependent RNA polymerase catalyzes the transcription of DNA into RNA using the four ribonucleoside triphosphates as substrates. The chain is DNA-directed RNA polymerase subunit beta' from Serratia proteamaculans (strain 568).